The sequence spans 77 residues: Structural DNA-binding protein p10 (77 aa).

The segment covering Met-1 to Asn-12 has biased composition (polar residues). Residues Met-1–His-38 are disordered. Residues Lys-17–Gly-27 show a composition bias toward low complexity.

The protein belongs to the asfivirus P10 family.

Its subcellular location is the virion. Functionally, may play a role in genome packaging through direct interaction with viral DNA. Binds to ssDNA and dsDNA with the same apparent affinity in vitro. In Ornithodoros (relapsing fever ticks), this protein is Structural DNA-binding protein p10.